The following is a 217-amino-acid chain: Meiotically up-regulated gene 37 protein (217 aa).

Functionally, has a role in meiosis. In Schizosaccharomyces pombe (strain 972 / ATCC 24843) (Fission yeast), this protein is Meiotically up-regulated gene 37 protein (mug37).